The sequence spans 522 residues: Peptide chain release factor 3 (522 aa).

One can recognise a tr-type G domain in the interval 10–277 (ASRKTFAIIS…TFVDFAPSPS (268 aa)). GTP-binding positions include 19–26 (SHPDAGKT), 87–91 (DTPGH), and 141–144 (NKMD).

It belongs to the TRAFAC class translation factor GTPase superfamily. Classic translation factor GTPase family. PrfC subfamily.

Its subcellular location is the cytoplasm. Functionally, increases the formation of ribosomal termination complexes and stimulates activities of RF-1 and RF-2. It binds guanine nucleotides and has strong preference for UGA stop codons. It may interact directly with the ribosome. The stimulation of RF-1 and RF-2 is significantly reduced by GTP and GDP, but not by GMP. The chain is Peptide chain release factor 3 from Listeria monocytogenes serotype 4b (strain F2365).